The primary structure comprises 622 residues: Chaperone protein HtpG (622 aa).

Positions Met1–Arg322 are a; substrate-binding. A b region spans residues Gln323–Arg539. The tract at residues Val540–Ala622 is c.

Belongs to the heat shock protein 90 family. Homodimer.

It localises to the cytoplasm. In terms of biological role, molecular chaperone. Has ATPase activity. In Desulfotalea psychrophila (strain LSv54 / DSM 12343), this protein is Chaperone protein HtpG.